The following is a 187-amino-acid chain: Calmodulin-like protein 1 (187 aa).

The residue at position 2 (alanine 2) is an N-acetylalanine. EF-hand domains follow at residues 8–43 (EQIGEFREAFSLFDKDGDGSITTKELGTVMRSLGQN), 44–79 (PTEAELQDMISEVDTDSNGNIEFKEFLGLMARKLRD), 81–116 (DSEEELKEAFRVFDKDQNGFISATELRHVMANIGER), and 117–152 (LTDEEVGEMISEADVDGDGQINYEEFVKCMMAKKRR). The Ca(2+) site is built by aspartate 21, aspartate 23, aspartate 25, serine 27, glutamate 32, aspartate 57, aspartate 59, asparagine 61, asparagine 63, glutamate 68, aspartate 94, aspartate 96, asparagine 98, glutamate 105, aspartate 130, aspartate 132, aspartate 134, glutamine 136, and glutamate 141. The interval 153-187 (KRIEEKRDHDGGSRTKSAGPSAAPASKRGQKCVIL) is disordered. Basic and acidic residues predominate over residues 154–165 (RIEEKRDHDGGS). Over residues 169–178 (SAGPSAAPAS) the composition is skewed to low complexity. Cysteine 184 bears the Cysteine methyl ester mark. Cysteine 184 is lipidated: S-farnesyl cysteine. Residues 185–187 (VIL) constitute a propeptide, removed in mature form.

The protein belongs to the calmodulin family.

It is found in the membrane. Functionally, calcium-binding protein that binds and activates CAMK1, a calcium/calmodulin-dependent kinase. The chain is Calmodulin-like protein 1 (CML1) from Oryza sativa subsp. japonica (Rice).